The primary structure comprises 240 residues: Probable septum site-determining protein MinC (240 aa).

Belongs to the MinC family. Interacts with MinD and FtsZ.

Its function is as follows. Cell division inhibitor that blocks the formation of polar Z ring septums. Rapidly oscillates between the poles of the cell to destabilize FtsZ filaments that have formed before they mature into polar Z rings. Prevents FtsZ polymerization. In Acinetobacter baumannii (strain ATCC 17978 / DSM 105126 / CIP 53.77 / LMG 1025 / NCDC KC755 / 5377), this protein is Probable septum site-determining protein MinC.